We begin with the raw amino-acid sequence, 200 residues long: Probable molybdenum cofactor guanylyltransferase (200 aa).

GTP-binding positions include 9–11 (LAG), Lys21, Asp69, and Asp100. Residue Asp100 participates in Mg(2+) binding.

Belongs to the MobA family. Requires Mg(2+) as cofactor.

It is found in the cytoplasm. It catalyses the reaction Mo-molybdopterin + GTP + H(+) = Mo-molybdopterin guanine dinucleotide + diphosphate. Its function is as follows. Transfers a GMP moiety from GTP to Mo-molybdopterin (Mo-MPT) cofactor (Moco or molybdenum cofactor) to form Mo-molybdopterin guanine dinucleotide (Mo-MGD) cofactor. This is Probable molybdenum cofactor guanylyltransferase from Bacillus cereus (strain Q1).